The following is a 670-amino-acid chain: tRNA 5-methylaminomethyl-2-thiouridine biosynthesis bifunctional protein MnmC (670 aa).

Residues 1–242 (MTFSVQHAEI…KRECLSGLKI (242 aa)) are tRNA (mnm(5)s(2)U34)-methyltransferase. The FAD-dependent cmnm(5)s(2)U34 oxidoreductase stretch occupies residues 269–670 (IGGGIASLCA…KKWLKGSKVE (402 aa)).

It in the N-terminal section; belongs to the methyltransferase superfamily. tRNA (mnm(5)s(2)U34)-methyltransferase family. This sequence in the C-terminal section; belongs to the DAO family. The cofactor is FAD.

The protein resides in the cytoplasm. It carries out the reaction 5-aminomethyl-2-thiouridine(34) in tRNA + S-adenosyl-L-methionine = 5-methylaminomethyl-2-thiouridine(34) in tRNA + S-adenosyl-L-homocysteine + H(+). Functionally, catalyzes the last two steps in the biosynthesis of 5-methylaminomethyl-2-thiouridine (mnm(5)s(2)U) at the wobble position (U34) in tRNA. Catalyzes the FAD-dependent demodification of cmnm(5)s(2)U34 to nm(5)s(2)U34, followed by the transfer of a methyl group from S-adenosyl-L-methionine to nm(5)s(2)U34, to form mnm(5)s(2)U34. The polypeptide is tRNA 5-methylaminomethyl-2-thiouridine biosynthesis bifunctional protein MnmC (Haemophilus influenzae (strain PittGG)).